Here is a 351-residue protein sequence, read N- to C-terminus: UDP-N-acetylglucosamine--N-acetylmuramyl-(pentapeptide) pyrophosphoryl-undecaprenol N-acetylglucosamine transferase (351 aa).

Residues 12–14, N124, R160, S188, I239, 258–263, and Q283 contribute to the UDP-N-acetyl-alpha-D-glucosamine site; these read TGG and ALTVCE.

It belongs to the glycosyltransferase 28 family. MurG subfamily.

Its subcellular location is the cell inner membrane. The catalysed reaction is di-trans,octa-cis-undecaprenyl diphospho-N-acetyl-alpha-D-muramoyl-L-alanyl-D-glutamyl-meso-2,6-diaminopimeloyl-D-alanyl-D-alanine + UDP-N-acetyl-alpha-D-glucosamine = di-trans,octa-cis-undecaprenyl diphospho-[N-acetyl-alpha-D-glucosaminyl-(1-&gt;4)]-N-acetyl-alpha-D-muramoyl-L-alanyl-D-glutamyl-meso-2,6-diaminopimeloyl-D-alanyl-D-alanine + UDP + H(+). It functions in the pathway cell wall biogenesis; peptidoglycan biosynthesis. Cell wall formation. Catalyzes the transfer of a GlcNAc subunit on undecaprenyl-pyrophosphoryl-MurNAc-pentapeptide (lipid intermediate I) to form undecaprenyl-pyrophosphoryl-MurNAc-(pentapeptide)GlcNAc (lipid intermediate II). This is UDP-N-acetylglucosamine--N-acetylmuramyl-(pentapeptide) pyrophosphoryl-undecaprenol N-acetylglucosamine transferase from Glaesserella parasuis serovar 5 (strain SH0165) (Haemophilus parasuis).